Here is a 497-residue protein sequence, read N- to C-terminus: MEIVIRTGSGDVRGSKENGIAVFRGIPYAEPPVGAHRFTAPRPPRPWDGVRDATEFSATAPRPPYPEAIGALLIERFIPGDDYLTLNVWTPDPNAVGLPVMVWIHGGAFTNGSGSEPVYDGAAFARDGVVFVSFNYRLGIIGFADLPDAPSNRGLLDQIAALEWVRDNIARFGGDPGNVTVFGESAGAMSVCTLMATPRARGLFRRAILQSGAGNMAVAAEDATTIAAVIAHRLGVEPTAAALAHVPVAQLLDVQQQVAQEIQGAPDPAVWGERIAGGSVLLPFAPVIDGELLSQRPAEAIAGGAGHDVDLLFGTTTDEYRLFLAPTGLLPFITGDYVTTHLAKSGLDADAAKAYTAEGRGEEPGDILASIITDQVFRIPALRIAESRVDAPARTFGYEFAWRTPQLDGILGACHAVELPFVFRTLDRAASLVGTNPPEELAETVHNAWVRFATSGDPGWPAWNPETRSVMRFDHPVSEMVTDPYPATRALWDGVPL.

Catalysis depends on S185, which acts as the Acyl-ester intermediate. Catalysis depends on charge relay system residues E319 and H415.

This sequence belongs to the type-B carboxylesterase/lipase family.

Its subcellular location is the secreted. The catalysed reaction is a carboxylic ester + H2O = an alcohol + a carboxylate + H(+). The polypeptide is Carboxylesterase (Thermobifida fusca (strain YX)).